A 602-amino-acid polypeptide reads, in one-letter code: Prostaglandin G/H synthase 1 (602 aa).

The first 26 residues, 1–26 (MSRRSLSLWFPLLLLLLLPPTPSVLL), serve as a signal peptide directing secretion. The region spanning 34–72 (PVNPCCYYPCQNQGVCVRFGLDNYQCDCTRTGYSGPNCT) is the EGF-like domain. Disulfide bonds link Cys38/Cys49, Cys39/Cys161, Cys43/Cys59, and Cys61/Cys71. 3 N-linked (GlcNAc...) asparagine glycosylation sites follow: Asn70, Asn106, and Asn146. The active-site Proton acceptor is the His209. Catalysis depends on Tyr387, which acts as the For cyclooxygenase activity. His390 serves as a coordination point for heme b. Cys571 and Cys577 are disulfide-bonded.

This sequence belongs to the prostaglandin G/H synthase family. Homodimer. Heme b serves as cofactor.

Its subcellular location is the microsome membrane. The protein localises to the endoplasmic reticulum membrane. It carries out the reaction (5Z,8Z,11Z,14Z)-eicosatetraenoate + AH2 + 2 O2 = prostaglandin H2 + A + H2O. The enzyme catalyses (5Z,8Z,11Z,14Z)-eicosatetraenoate + 2 O2 = prostaglandin G2. The catalysed reaction is prostaglandin G2 + AH2 = prostaglandin H2 + A + H2O. It catalyses the reaction (9Z,12Z)-octadecadienoate + AH2 + O2 = (9R)-hydroxy-(10E,12Z)-octadecadienoate + A + H2O. It carries out the reaction (9Z,12Z)-octadecadienoate + AH2 + O2 = (9S)-hydroxy-(10E,12Z)-octadecadienoate + A + H2O. The enzyme catalyses (9Z,12Z)-octadecadienoate + AH2 + O2 = (13S)-hydroxy-(9Z,11E)-octadecadienoate + A + H2O. The catalysed reaction is (9Z,12Z)-octadecadienoate + AH2 + O2 = (13R)-hydroxy-(9Z,11E)-octadecadienoate + A + H2O. The protein operates within lipid metabolism; prostaglandin biosynthesis. Its activity is regulated as follows. The cyclooxygenase activity is inhibited by nonsteroidal anti-inflammatory drugs (NSAIDs) including ibuprofen, flurbiprofen, ketoprofen, naproxen, flurbiprofen, anirolac, fenclofenac and diclofenac. Functionally, dual cyclooxygenase and peroxidase that plays an important role in the biosynthesis pathway of prostanoids, a class of C20 oxylipins mainly derived from arachidonate ((5Z,8Z,11Z,14Z)-eicosatetraenoate, AA, C20:4(n-6)), with a particular role in the inflammatory response. The cyclooxygenase activity oxygenates AA to the hydroperoxy endoperoxide prostaglandin G2 (PGG2), and the peroxidase activity reduces PGG2 to the hydroxy endoperoxide prostaglandin H2 (PGH2), the precursor of all 2-series prostaglandins and thromboxanes. This complex transformation is initiated by abstraction of hydrogen at carbon 13 (with S-stereochemistry), followed by insertion of molecular O2 to form the endoperoxide bridge between carbon 9 and 11 that defines prostaglandins. The insertion of a second molecule of O2 (bis-oxygenase activity) yields a hydroperoxy group in PGG2 that is then reduced to PGH2 by two electrons. Involved in the constitutive production of prostanoids in particular in the stomach and platelets. In gastric epithelial cells, it is a key step in the generation of prostaglandins, such as prostaglandin E2 (PGE2), which plays an important role in cytoprotection. In platelets, it is involved in the generation of thromboxane A2 (TXA2), which promotes platelet activation and aggregation, vasoconstriction and proliferation of vascular smooth muscle cells. Can also use linoleate (LA, (9Z,12Z)-octadecadienoate, C18:2(n-6)) as substrate and produce hydroxyoctadecadienoates (HODEs) in a regio- and stereospecific manner, being (9R)-HODE ((9R)-hydroxy-(10E,12Z)-octadecadienoate) and (13S)-HODE ((13S)-hydroxy-(9Z,11E)-octadecadienoate) its major products. The chain is Prostaglandin G/H synthase 1 from Mus musculus (Mouse).